The sequence spans 206 residues: Probable glutathione S-transferase 9 (206 aa).

Residues 2–79 (VSYKLIYFQS…YLSKQFGISG (78 aa)) form the GST N-terminal domain. Glutathione-binding positions include Tyr-8, Trp-39, Lys-43, 49 to 51 (GQV), and 63 to 64 (QS). The GST C-terminal domain maps to 81–206 (SSWEEAQVDA…WIEKRPVTSR (126 aa)).

This sequence belongs to the GST superfamily. Sigma family.

It carries out the reaction RX + glutathione = an S-substituted glutathione + a halide anion + H(+). Its function is as follows. Conjugation of reduced glutathione to a wide number of exogenous and endogenous hydrophobic electrophiles. The protein is Probable glutathione S-transferase 9 (gst-9) of Caenorhabditis elegans.